A 238-amino-acid polypeptide reads, in one-letter code: 5-amino-6-(5-phospho-D-ribitylamino)uracil phosphatase YigB (238 aa).

Asp-16 acts as the Nucleophile in catalysis. Positions 16, 18, and 188 each coordinate Mg(2+). 16–18 lines the substrate pocket; the sequence is DLD.

This sequence belongs to the HAD-like hydrolase superfamily. Mg(2+) is required as a cofactor. Mn(2+) serves as cofactor. It depends on Co(2+) as a cofactor. The cofactor is Zn(2+).

It catalyses the reaction 5-amino-6-(5-phospho-D-ribitylamino)uracil + H2O = 5-amino-6-(D-ribitylamino)uracil + phosphate. It functions in the pathway cofactor biosynthesis; riboflavin biosynthesis; 5-amino-6-(D-ribitylamino)uracil from GTP: step 4/4. Functionally, catalyzes the dephosphorylation of 5-amino-6-(5-phospho-D-ribitylamino)uracil, and thus could be involved in the riboflavin biosynthesis pathway. Is also able to dephosphorylate flavin mononucleotide (FMN) and other phosphoric acid esters. YigB is important for the formation of dormant persister cells. The chain is 5-amino-6-(5-phospho-D-ribitylamino)uracil phosphatase YigB (yigB) from Escherichia coli (strain K12).